Consider the following 2452-residue polypeptide: Lovastatin diketide synthase lovF (2452 aa).

The Ketosynthase family 3 (KS3) domain occupies 10-381; it reads PAPIAVVGMG…GANAHAIVER (372 aa). Residues C173, H308, and H343 each act as for beta-ketoacyl synthase activity in the active site. Residues 496–790 form a malonyl-CoA:ACP transacylase (MAT) domain region; sequence VFTGQGAQWF…PYLSCLSRGK (295 aa). The active-site For malonyltransferase activity is the S555. The interval 861–998 is N-terminal hotdog fold; sequence HDLIGLQEPL…GLVRVDMDQP (138 aa). A dehydratase (DH) domain region spans residues 861-1166; that stretch reads HDLIGLQEPL…LEGLVFQSLG (306 aa). The PKS/mFAS DH domain occupies 861 to 1171; that stretch reads HDLIGLQEPL…FQSLGASLGT (311 aa). The active-site Proton acceptor; for dehydratase activity is the H893. Residues 997 to 1017 form a disordered region; sequence QPASSLSNPQRADPRPWSRKT. Positions 1012–1171 are C-terminal hotdog fold; the sequence is PWSRKTAPQD…FQSLGASLGT (160 aa). Residue D1079 is the Proton donor; for dehydratase activity of the active site. The methyltransferase (CMet) domain stretch occupies residues 1343-1528; it reads ELVRLCCHKN…RDCDSDEFYM (186 aa). The segment at 1745-2064 is enoylreductase (ER) domain; the sequence is GLLDSLYFRK…SGQHVGKIVV (320 aa). Positions 2088-2260 are ketoreductase (KR) domain; sequence SYLVAGGLGG…AVTIDLGMVQ (173 aa). The Carrier domain maps to 2373–2450; that stretch reads ASIAVIMEAM…KVAEVVLQRY (78 aa). O-(pantetheine 4'-phosphoryl)serine is present on S2410.

As to quaternary structure, interacts with LovD. The cofactor is pantetheine 4'-phosphate.

It catalyses the reaction holo-[2-methylbutanoate polyketide synthase] + 2 malonyl-CoA + S-adenosyl-L-methionine + 2 NADPH + 3 H(+) = (S)-2-methylbutanoyl-[2-methylbutanoate polyketide synthase] + S-adenosyl-L-homocysteine + 2 CO2 + 2 NADP(+) + 2 CoA + H2O. It functions in the pathway polyketide biosynthesis; lovastatin biosynthesis. Its function is as follows. Lovastatin diketide synthase; part of the gene cluster that mediates the biosynthesis of lovastatin (also known as mevinolin, mevacor or monacolin K), a hypolipidemic inhibitor of (3S)-hydroxymethylglutaryl-coenzyme A (HMG-CoA) reductase (HMGR). The first step in the biosynthesis of lovastatin is the production of dihydromonacolin L acid by the lovastatin nonaketide synthase lovB and the trans-acting enoyl reductase lovC via condensation of one acetyl-CoA unit and 8 malonyl-CoA units. Dihydromonacolin L acid is released from lovB by the thioesterase lovG. Next, dihydromonacolin L acid is oxidized by the dihydromonacolin L monooxygenase lovA twice to form monacolin J acid. The 2-methylbutyrate moiety of lovastatin is synthesized by the lovastatin diketide synthase lovF via condensation of one acetyl-CoA unit and one malonyl-CoA unit. Finally, the covalent attachment of this moiety to monacolin J acid is catalyzed by the transesterase lovD to yield lovastatin. LovD has broad substrate specificity and can also convert monacolin J to simvastatin using alpha-dimethylbutanoyl-S-methyl-3-mercaptopropionate (DMB-S-MMP) as the thioester acyl donor, and can also catalyze the reverse reaction and function as hydrolase in vitro. LovD has much higher activity with LovF-bound 2-methylbutanoate than with free diketide substrates. The protein is Lovastatin diketide synthase lovF of Aspergillus terreus (strain NIH 2624 / FGSC A1156).